The chain runs to 310 residues: Probable GTP 3',8-cyclase (310 aa).

The Radical SAM core domain occupies 5 to 218 (KYGRSLQKLR…VNIIFELGGR (214 aa)). R14 provides a ligand contact to GTP. Residues C21, C25, and C28 each contribute to the [4Fe-4S] cluster site. K62 is a binding site for GTP. An S-adenosyl-L-methionine-binding site is contributed by G66. Residue T91 participates in GTP binding. S115 provides a ligand contact to S-adenosyl-L-methionine. K153 is a binding site for GTP. Residues C251, C254, and C268 each coordinate [4Fe-4S] cluster.

The protein belongs to the radical SAM superfamily. MoaA family. [4Fe-4S] cluster serves as cofactor.

It catalyses the reaction GTP + AH2 + S-adenosyl-L-methionine = (8S)-3',8-cyclo-7,8-dihydroguanosine 5'-triphosphate + 5'-deoxyadenosine + L-methionine + A + H(+). The protein operates within cofactor biosynthesis; molybdopterin biosynthesis. Functionally, catalyzes the cyclization of GTP to (8S)-3',8-cyclo-7,8-dihydroguanosine 5'-triphosphate. The polypeptide is Probable GTP 3',8-cyclase (Pyrobaculum aerophilum (strain ATCC 51768 / DSM 7523 / JCM 9630 / CIP 104966 / NBRC 100827 / IM2)).